The primary structure comprises 531 residues: Peptide chain release factor 3 (531 aa).

A tr-type G domain is found at 13 to 282 (AKRRTFAIIS…TLIEHAPPPK (270 aa)). Residues 22 to 29 (SHPDAGKT), 90 to 94 (DTPGH), and 144 to 147 (NKLD) contribute to the GTP site.

It belongs to the TRAFAC class translation factor GTPase superfamily. Classic translation factor GTPase family. PrfC subfamily.

The protein resides in the cytoplasm. Functionally, increases the formation of ribosomal termination complexes and stimulates activities of RF-1 and RF-2. It binds guanine nucleotides and has strong preference for UGA stop codons. It may interact directly with the ribosome. The stimulation of RF-1 and RF-2 is significantly reduced by GTP and GDP, but not by GMP. The sequence is that of Peptide chain release factor 3 from Psychrobacter sp. (strain PRwf-1).